The sequence spans 208 residues: Imidazoleglycerol-phosphate dehydratase (208 aa).

This sequence belongs to the imidazoleglycerol-phosphate dehydratase family.

The catalysed reaction is D-erythro-1-(imidazol-4-yl)glycerol 3-phosphate = 3-(imidazol-4-yl)-2-oxopropyl phosphate + H2O. The protein operates within amino-acid biosynthesis; L-histidine biosynthesis; L-histidine from 5-phospho-alpha-D-ribose 1-diphosphate: step 6/9. The polypeptide is Imidazoleglycerol-phosphate dehydratase (his3) (Trichoderma harzianum (Hypocrea lixii)).